The following is a 703-amino-acid chain: Elongation factor G (703 aa).

The tr-type G domain occupies 8–290; that stretch reads ARYRNIGICA…AVIEYLPAPT (283 aa). Residues 17–24, 88–92, and 142–145 each bind GTP; these read AHVDAGKT, DTPGH, and NKMD.

It belongs to the TRAFAC class translation factor GTPase superfamily. Classic translation factor GTPase family. EF-G/EF-2 subfamily.

The protein resides in the cytoplasm. Functionally, catalyzes the GTP-dependent ribosomal translocation step during translation elongation. During this step, the ribosome changes from the pre-translocational (PRE) to the post-translocational (POST) state as the newly formed A-site-bound peptidyl-tRNA and P-site-bound deacylated tRNA move to the P and E sites, respectively. Catalyzes the coordinated movement of the two tRNA molecules, the mRNA and conformational changes in the ribosome. The protein is Elongation factor G of Teredinibacter turnerae (strain ATCC 39867 / T7901).